Reading from the N-terminus, the 524-residue chain is B3 domain-containing protein Os07g0183700 (524 aa).

Disordered stretches follow at residues 94 to 152 and 191 to 232; these read DGEG…TSVS and PLQP…FQTQ. The segment covering 100–109 has biased composition (pro residues); it reads CAPPPSPIPA. Composition is skewed to low complexity over residues 110 to 124 and 200 to 232; these read GPAS…SAPA and AAAA…FQTQ. The segment at residues 336–434 is a DNA-binding region (TF-B3); sequence SFVKPLTYTD…EMFMAVRRTR (99 aa).

The protein localises to the nucleus. In Oryza sativa subsp. japonica (Rice), this protein is B3 domain-containing protein Os07g0183700.